The primary structure comprises 224 residues: UPF0758 protein PSPPH_0210 (224 aa).

The 123-residue stretch at 102-224 folds into the MPN domain; the sequence is ALENPTQVRN…PLSMVERGLM (123 aa). His173, His175, and Asp186 together coordinate Zn(2+). A JAMM motif motif is present at residues 173-186; that stretch reads HNHPSGITTPSRSD.

The protein belongs to the UPF0758 family.

This chain is UPF0758 protein PSPPH_0210, found in Pseudomonas savastanoi pv. phaseolicola (strain 1448A / Race 6) (Pseudomonas syringae pv. phaseolicola (strain 1448A / Race 6)).